A 364-amino-acid chain; its full sequence is Protein-glutamate methylesterase/protein-glutamine glutaminase 1 (364 aa).

The Response regulatory domain occupies 6–123; the sequence is KVLCVDDSAL…RDGMLDYSEK (118 aa). The residue at position 57 (aspartate 57) is a 4-aspartylphosphate. The 193-residue stretch at 165-357 folds into the CheB-type methylesterase domain; the sequence is LVSTEKLIIV…RRIMARLASM (193 aa). Residues serine 177, histidine 203, and aspartate 299 contribute to the active site.

This sequence belongs to the CheB family. In terms of processing, phosphorylated by CheA. Phosphorylation of the N-terminal regulatory domain activates the methylesterase activity.

It localises to the cytoplasm. It carries out the reaction [protein]-L-glutamate 5-O-methyl ester + H2O = L-glutamyl-[protein] + methanol + H(+). The enzyme catalyses L-glutaminyl-[protein] + H2O = L-glutamyl-[protein] + NH4(+). In terms of biological role, involved in chemotaxis. Part of a chemotaxis signal transduction system that modulates chemotaxis in response to various stimuli. Catalyzes the demethylation of specific methylglutamate residues introduced into the chemoreceptors (methyl-accepting chemotaxis proteins or MCP) by CheR. Also mediates the irreversible deamidation of specific glutamine residues to glutamic acid. This chain is Protein-glutamate methylesterase/protein-glutamine glutaminase 1, found in Burkholderia mallei (strain ATCC 23344).